The chain runs to 415 residues: Serine hydroxymethyltransferase 2 (415 aa).

Residues Leu-122 and 126–128 each bind (6S)-5,6,7,8-tetrahydrofolate; that span reads GHL. The residue at position 230 (Lys-230) is an N6-(pyridoxal phosphate)lysine.

The protein belongs to the SHMT family. Homodimer. Pyridoxal 5'-phosphate is required as a cofactor.

The protein localises to the cytoplasm. The catalysed reaction is (6R)-5,10-methylene-5,6,7,8-tetrahydrofolate + glycine + H2O = (6S)-5,6,7,8-tetrahydrofolate + L-serine. The protein operates within one-carbon metabolism; tetrahydrofolate interconversion. It functions in the pathway amino-acid biosynthesis; glycine biosynthesis; glycine from L-serine: step 1/1. Catalyzes the reversible interconversion of serine and glycine with tetrahydrofolate (THF) serving as the one-carbon carrier. This reaction serves as the major source of one-carbon groups required for the biosynthesis of purines, thymidylate, methionine, and other important biomolecules. Also exhibits THF-independent aldolase activity toward beta-hydroxyamino acids, producing glycine and aldehydes, via a retro-aldol mechanism. This chain is Serine hydroxymethyltransferase 2, found in Burkholderia lata (strain ATCC 17760 / DSM 23089 / LMG 22485 / NCIMB 9086 / R18194 / 383).